Consider the following 181-residue polypeptide: Adenine phosphoribosyltransferase (181 aa).

Belongs to the purine/pyrimidine phosphoribosyltransferase family. Homodimer.

It localises to the cytoplasm. It catalyses the reaction AMP + diphosphate = 5-phospho-alpha-D-ribose 1-diphosphate + adenine. It participates in purine metabolism; AMP biosynthesis via salvage pathway; AMP from adenine: step 1/1. Functionally, catalyzes a salvage reaction resulting in the formation of AMP, that is energically less costly than de novo synthesis. This is Adenine phosphoribosyltransferase from Colwellia psychrerythraea (strain 34H / ATCC BAA-681) (Vibrio psychroerythus).